Consider the following 258-residue polypeptide: MSETKNELEDLLEKAATEPAHRPAFFRTLLESTVWVPGTAAQGEAVVEDSALDLQHWEKEDGTSVIPFFTSLEALQQAVEDEQAFVVMPVRTLFEMTLGETLFLNAKLPTGKEFMPREISLLIGEEGNPLSSQEILEGGESLILSEVAEPPAQMIDSLTTLFKTIKPVKRAFICSIKENEEAQPNLLIGIEADGDIEEIIQATGSVATDTLPGDEPIDICQVKKGEKGISHFITEHIAPFYERRWGGFLRDFKQNRII.

May be involved in the enhancement of serine-sensitivity. The chain is Protein SseB (sseB) from Escherichia coli (strain K12).